The primary structure comprises 1358 residues: Tenascin-R (1358 aa).

Positions 1 to 31 are cleaved as a signal peptide; the sequence is MGIDGETVVLKNMLIGVNLILLGSMLKPSEC. Positions 37–58 are disordered; it reads TERAQRQTVEEEGGASSYNTSS. N-linked (GlcNAc...) asparagine glycosylation is present at Asn-55. Positions 127 to 157 form a coiled coil; it reads CASSSQVLQELLSRIEMLEREVSLLRDQCNT. A glycan (O-linked (Xyl...) (chondroitin sulfate) serine) is linked at Ser-176. N-linked (GlcNAc...) asparagine glycans are attached at residues Asn-180 and Asn-198. 3 EGF-like domains span residues 188–199, 219–230, and 250–261; these read CICNEGWFGKNC, CICDSEYSGDDC, and CVCEEPYTGEDC. Ser-271 is a glycosylation site (O-linked (Xyl...) (chondroitin sulfate) serine). The N-linked (GlcNAc...) asparagine glycan is linked to Asn-278. The 12-residue stretch at 281–292 folds into the EGF-like 4 domain; the sequence is CLCQEGYAGEDC. Cystine bridges form between Cys-297–Cys-307 and Cys-314–Cys-323. Residue Ser-302 is glycosylated (O-linked (Xyl...) (chondroitin sulfate) serine). Residues 312–323 form the EGF-like 5 domain; that stretch reads CICEEGYQGPDC. 9 consecutive Fibronectin type-III domains span residues 328–420, 421–505, 506–597, 598–687, 688–777, 778–865, 866–955, 956–1042, and 1043–1131; these read PPED…TPQG, LQFK…TVID, GPTQ…IDAP, KNLR…TELD, SPRD…FRPI, SHLH…TGID, PPKN…AMDS, PMDL…TLLD, and PPDN…GGRV. Asn-392, Asn-470, and Asn-581 each carry an N-linked (GlcNAc...) asparagine glycan. At Ser-724 the chain carries Phosphoserine. 6 N-linked (GlcNAc...) asparagine glycosylation sites follow: Asn-791, Asn-869, Asn-874, Asn-1036, Asn-1046, and Asn-1261. Residues 1129–1344 enclose the Fibrinogen C-terminal domain; that stretch reads GRVFSHPQDC…FVEMKMRPYI (216 aa).

Belongs to the tenascin family. In terms of assembly, interacts with BCAN and ACAN in a calcium-dependent manner. Interacts with SCN2B, PTPRZ1, and CSPG3. Forms oligomers. Isoforms 1 and 2 form respectively trimeric (tribrachion) and dimeric kink-armed rodlike structures, which are linked by disulfide bridges. Interacts with CNTN1, TNC and FN1. In terms of processing, contains N-linked oligosaccharides with a sulfated carbohydrate structures. Contains N-linked oligosaccharides, O-linked sialylated structures and O-linked chondroitin sulfate glycosaminoglycans. As to expression, brain-specific.

The protein localises to the secreted. It is found in the extracellular space. It localises to the extracellular matrix. Neural extracellular matrix (ECM) protein involved in interactions with different cells and matrix components. Theses interactions can influence cellular behavior by either evoking a stable adhesion and differentiation, or repulsion and inhibition of neurite growth. Binding to cell surface gangliosides inhibits RGD-dependent integrin-mediated cell adhesion and results in an inhibition of PTK2/FAK1 (FAK) phosphorylation and cell detachment. Binding to membrane surface sulfatides results in a oligodendrocyte adhesion and differentiation. Interaction with CNTN1 induces a repulsion of neurons and an inhibition of neurite outgrowth. Interacts with SCN2B may play a crucial role in clustering and regulation of activity of sodium channels at nodes of Ranvier. TNR-linked chondroitin sulfate glycosaminoglycans are involved in the interaction with FN1 and mediates inhibition of cell adhesion and neurite outgrowth. The highly regulated addition of sulfated carbohydrate structure may modulate the adhesive properties of TNR over the course of development and during synapse maintenance. The chain is Tenascin-R (Tnr) from Mus musculus (Mouse).